Here is a 976-residue protein sequence, read N- to C-terminus: 3-hydroxy-3-methylglutaryl-coenzyme A reductase (976 aa).

Residues 1 to 36 (MDHEGCQGQHPQQCCQWVSNAWSEFLDLLKNAETLD) are Lumenal-facing. Positions 36–217 (DIVIMLLGYI…FTFYTAILSI (182 aa)) constitute an SSD domain. The chain crosses the membrane as a helical span at residues 37 to 57 (IVIMLLGYIAMHLTFVSLFLS). At 58 to 64 (MRKMGSK) the chain is on the cytoplasmic side. A helical membrane pass occupies residues 65 to 85 (FWLGICTLFSSVFAFLFGLVV). Residues 86–90 (TTKLG) lie on the Lumenal side of the membrane. A helical transmembrane segment spans residues 91–111 (VPISVILLSEGLPFLVVTIGF). Over 112-169 (EKNIVLTRAVMSHAIEHRRIQAQNSKSGKRSPDGSTQNMIQYAVQAAIKEKGFEIIRD) the chain is Cytoplasmic. A helical transmembrane segment spans residues 170–190 (YAIEIVILVIGAASGVQGGLQ). Topologically, residues 191–193 (QFC) are lumenal. A helical transmembrane segment spans residues 194 to 214 (FLAAWTLFFDFILLFTFYTAI). Residues 215 to 272 (LSIKLRSTVSSVMSICVWPLRMMASRRVAENVAKGDDELNRVRGDAPLFGRKSSSIPK) lie on the Cytoplasmic side of the membrane. The helical transmembrane segment at 273–293 (FKVLMILGFIFVNIVNICSIP) threads the bilayer. The Lumenal segment spans residues 294–401 (FRNPSSMSTI…GGILKSLEDP (108 aa)). Residues 402–422 (VLSKWIVIALALSVALNGYLF) traverse the membrane as a helical segment. The Cytoplasmic portion of the chain corresponds to 423 to 976 (NVARWGIKDP…RYSEVKAIDE (554 aa)). Glu618 acts as the Charge relay system in catalysis. 624–630 (SASRGCK) provides a ligand contact to CoA. NADP(+) is bound by residues 685-687 (SRF) and 712-720 (DAMGMNMIS). The active-site Charge relay system is Lys752. 781–783 (VLK) is a CoA binding site. The Charge relay system role is filled by Asp828. 923–924 (AH) contributes to the CoA binding site. His924 (proton donor) is an active-site residue. Residues 926–954 (QHNRSAAPSRSTTPGSSHDARLTGHDQCP) form a disordered region. 928 to 929 (NR) contacts NADP(+). Over residues 928–941 (NRSAAPSRSTTPGS) the composition is skewed to polar residues. Residues 943–953 (HDARLTGHDQC) show a composition bias toward basic and acidic residues.

Belongs to the HMG-CoA reductase family.

It localises to the endoplasmic reticulum membrane. It catalyses the reaction (R)-mevalonate + 2 NADP(+) + CoA = (3S)-3-hydroxy-3-methylglutaryl-CoA + 2 NADPH + 2 H(+). Its pathway is metabolic intermediate biosynthesis; (R)-mevalonate biosynthesis; (R)-mevalonate from acetyl-CoA: step 3/3. HMG-CoA reductase; part of the first module of ergosterol biosynthesis pathway that includes the early steps of the pathway, conserved across all eukaryotes, and which results in the formation of mevalonate from acetyl-coenzyme A (acetyl-CoA). In this module, the cytosolic acetyl-CoA acetyltransferase catalyzes the formation of acetoacetyl-CoA. The hydroxymethylglutaryl-CoA synthase then condenses acetyl-CoA with acetoacetyl-CoA to form HMG-CoA. The rate-limiting step of the early module is the reduction to mevalonate by the 3-hydroxy-3-methylglutaryl-coenzyme A (HMG-CoA) reductase HMGR. The polypeptide is 3-hydroxy-3-methylglutaryl-coenzyme A reductase (Fusarium fujikuroi (Bakanae and foot rot disease fungus)).